We begin with the raw amino-acid sequence, 179 residues long: Endoribonuclease YbeY (179 aa).

3 residues coordinate Zn(2+): histidine 148, histidine 152, and histidine 158.

The protein belongs to the endoribonuclease YbeY family. The cofactor is Zn(2+).

It localises to the cytoplasm. Functionally, single strand-specific metallo-endoribonuclease involved in late-stage 70S ribosome quality control and in maturation of the 3' terminus of the 16S rRNA. This is Endoribonuclease YbeY from Prochlorococcus marinus (strain MIT 9215).